Consider the following 777-residue polypeptide: MQLNFLLFVFIFLMVFHLNIFNKGKRQNLVSAYLNHFKKSYFSGVTSGSDCVNKSEVSSDNNNNNNNNNNKIAHNFFSKKYQRNFENNNLSENQENNKNIIYSGSNIFKNIYNTEMMSNNNTVDVNMMDNNPAARLEELRTIMKKNKIDVYILINSDEHNSEIINEKDKKIVKITNYSGADGILIVTKDKPILYVNALYELQAMNELDQNLFTLRISRIDNRDEIFETISSLEFNTIAFDGKNTSVVFYEKLRKALLNAYPKKKIVEKIIYNNNFDDVNKKDDENVLNFLVLEKSLVEIKDYPVNNKTLYIHDRKYNGACAGEKIDKLKQSLMYDIKNVDNLLLSELDEIAYLLNLRGYDYQYSPLFYSYLLFQFDREEQDFSKIVFFTTVKNLPADVKNLLEINKVIVKEYEEIVPYLRDVVIPSIPKHNDDNPDFKKYDISLSPYINLMIYKLFDRKNVLLQNSPVVKMKAVKNDVEIDNMKQAHILDGLALLQFFHWCEQKRKTKELFNETEMSLRHKVDYFRSTKKNFIFPSFSTISASGPNAAVIHYECTDKTNATIKPAIYLLDSGGQYLHGTTDVTRTTHFGEPTAEEKRIYTLVLKGHLRLRKVIFASYTNSSALDFIARENLFNNFMDYNHGTGHGVGLTLNVHEGGCSIGPVGGAPLKKNMVLSNEPGYYMKDKFGVRIENMQYVISKEITDTTEYLSFDDLTMYPYEKKLLDFSLLTNQEIKELNEYHTTIRNTLLPLVKQSPQEYGESVEKYLIEITEPIAIHNN.

A signal peptide spans 1 to 17; it reads MQLNFLLFVFIFLMVFH. His-551 provides a ligand contact to substrate. Asp-570 and Asp-581 together coordinate Mn(2+). His-640 contacts substrate. His-644 contacts Mn(2+). Residue His-653 coordinates substrate. Mn(2+)-binding residues include Glu-676 and Glu-690.

Belongs to the peptidase M24B family. Homodimer. The cofactor is Mn(2+). In terms of processing, the N-terminus may be proteolytically cleaved to generate a 73-kDa mature form.

The protein localises to the vacuole lumen. It is found in the cytoplasm. The enzyme catalyses Release of any N-terminal amino acid, including proline, that is linked to proline, even from a dipeptide or tripeptide.. Its activity is regulated as follows. Partially activated by Co(2+) and Mg(2+) has no effect. Inhibited by 1 mM Zn(2+), Ni(2+), or Cu(2+). Inhibited by apstatin, a non-hydrolysable peptide analog. In terms of biological role, catalyzes the removal of a penultimate prolyl residue from the N-termini of peptides. In the food vacuole, involved in the final step of host hemoglobin catabolism, by cleaving hemoglobin-derived oligopeptides. In the cytoplasm, may be involved in the last steps of the turnover of ubiquitinated proteins. In Plasmodium falciparum (isolate 3D7), this protein is Aminopeptidase P.